A 375-amino-acid polypeptide reads, in one-letter code: Queuine tRNA-ribosyltransferase (375 aa).

Aspartate 93 functions as the Proton acceptor in the catalytic mechanism. Residues 93-97, aspartate 147, glutamine 194, and glycine 221 contribute to the substrate site; that span reads DSGGY. The interval 252 to 258 is RNA binding; that stretch reads GVGKPDD. Aspartate 271 acts as the Nucleophile in catalysis. Positions 276-280 are RNA binding; important for wobble base 34 recognition; it reads TRSGR. 4 residues coordinate Zn(2+): cysteine 309, cysteine 311, cysteine 314, and histidine 340.

The protein belongs to the queuine tRNA-ribosyltransferase family. As to quaternary structure, homodimer. Within each dimer, one monomer is responsible for RNA recognition and catalysis, while the other monomer binds to the replacement base PreQ1. Zn(2+) serves as cofactor.

The catalysed reaction is 7-aminomethyl-7-carbaguanine + guanosine(34) in tRNA = 7-aminomethyl-7-carbaguanosine(34) in tRNA + guanine. It participates in tRNA modification; tRNA-queuosine biosynthesis. Functionally, catalyzes the base-exchange of a guanine (G) residue with the queuine precursor 7-aminomethyl-7-deazaguanine (PreQ1) at position 34 (anticodon wobble position) in tRNAs with GU(N) anticodons (tRNA-Asp, -Asn, -His and -Tyr). Catalysis occurs through a double-displacement mechanism. The nucleophile active site attacks the C1' of nucleotide 34 to detach the guanine base from the RNA, forming a covalent enzyme-RNA intermediate. The proton acceptor active site deprotonates the incoming PreQ1, allowing a nucleophilic attack on the C1' of the ribose to form the product. After dissociation, two additional enzymatic reactions on the tRNA convert PreQ1 to queuine (Q), resulting in the hypermodified nucleoside queuosine (7-(((4,5-cis-dihydroxy-2-cyclopenten-1-yl)amino)methyl)-7-deazaguanosine). The protein is Queuine tRNA-ribosyltransferase of Sphingopyxis alaskensis (strain DSM 13593 / LMG 18877 / RB2256) (Sphingomonas alaskensis).